The chain runs to 315 residues: Putative purine nucleoside phosphorylase (315 aa).

Phosphate-binding positions include Ser49, His81, 103 to 105, and Ala135; that span reads RYH. Glu220 lines the a purine D-ribonucleoside pocket. Ser239 provides a ligand contact to phosphate. Asn262 contacts a purine D-ribonucleoside.

It belongs to the PNP/MTAP phosphorylase family.

It is found in the cytoplasm. It localises to the nucleus. It catalyses the reaction a purine D-ribonucleoside + phosphate = a purine nucleobase + alpha-D-ribose 1-phosphate. Its pathway is purine metabolism; purine nucleoside salvage. The purine nucleoside phosphorylases catalyze the phosphorolytic breakdown of the N-glycosidic bond in the beta-(deoxy)ribonucleoside molecules, with the formation of the corresponding free purine bases and pentose-1-phosphate. Cleaves guanosine and inosine. The polypeptide is Putative purine nucleoside phosphorylase (Schizosaccharomyces pombe (strain 972 / ATCC 24843) (Fission yeast)).